Consider the following 187-residue polypeptide: Keratin-associated protein 5-8 (187 aa).

9 repeat units span residues C28–P31, C34–P37, C40–P43, C109–P112, C119–P122, C138–P141, C148–P151, C167–P170, and C177–P180. The segment at C28 to P180 is 9 X 4 AA repeats of C-C-X-P.

Belongs to the KRTAP type 5 family. Restricted to hair root, not detected in any other tissues. Expressed in cuticle layers of differentiating hair follicles.

In terms of biological role, in the hair cortex, hair keratin intermediate filaments are embedded in an interfilamentous matrix, consisting of hair keratin-associated protein (KRTAP), which are essential for the formation of a rigid and resistant hair shaft through their extensive disulfide bond cross-linking with abundant cysteine residues of hair keratins. The matrix proteins include the high-sulfur and high-glycine-tyrosine keratins. This Homo sapiens (Human) protein is Keratin-associated protein 5-8 (KRTAP5-8).